We begin with the raw amino-acid sequence, 199 residues long: Molybdenum cofactor guanylyltransferase (199 aa).

GTP contacts are provided by residues Leu-12–Gly-14, Lys-25, Asn-53, Asp-71, and Asp-101. A Mg(2+)-binding site is contributed by Asp-101.

This sequence belongs to the MobA family. Monomer. The cofactor is Mg(2+).

It localises to the cytoplasm. The enzyme catalyses Mo-molybdopterin + GTP + H(+) = Mo-molybdopterin guanine dinucleotide + diphosphate. In terms of biological role, transfers a GMP moiety from GTP to Mo-molybdopterin (Mo-MPT) cofactor (Moco or molybdenum cofactor) to form Mo-molybdopterin guanine dinucleotide (Mo-MGD) cofactor. The protein is Molybdenum cofactor guanylyltransferase of Polynucleobacter asymbioticus (strain DSM 18221 / CIP 109841 / QLW-P1DMWA-1) (Polynucleobacter necessarius subsp. asymbioticus).